The chain runs to 463 residues: Argininosuccinate lyase (463 aa).

This sequence belongs to the lyase 1 family. Argininosuccinate lyase subfamily.

The protein resides in the cytoplasm. The catalysed reaction is 2-(N(omega)-L-arginino)succinate = fumarate + L-arginine. The protein operates within amino-acid biosynthesis; L-arginine biosynthesis; L-arginine from L-ornithine and carbamoyl phosphate: step 3/3. This chain is Argininosuccinate lyase, found in Thiobacillus denitrificans (strain ATCC 25259 / T1).